The chain runs to 394 residues: MEYNPIKKVVSGNYAAAYAALHARVQVVAAYPITPQTSIIEKIAEFIANGEADIQYIPVESEHSAMAACIGASATGARVFTATSAQGLALMHEMLHWAAGSRLPIVMVNVNRAMAPPWSVWDDQTDSLSQRDTGWMQFYAENNQEVYDGVLMAYKVAETVNIPTMIIESAFILSHTYEVVNMIPQELVDEFLPPRKPLYTLTDFENPIAVGALATPADYYEFRYKIAKAHEEAKKVIKSVGKEFGERFGRDYSKMIETGYIEDADFVFMGMGSLMGTVKEAVDLLRKEGYKVGYAKVRWFRPFPKEELLEIAESVKGIAVLDRNFSFGQEGILFTEAKGALYNTGVRPIMKDYIVGLGGRDFTVRDVKAIAEDMKKVVESGKLDKEIEWYHLKR.

As to quaternary structure, heterotetramer of one alpha, one beta, one delta and one gamma chain.

The enzyme catalyses 3-methyl-2-oxobutanoate + 2 oxidized [2Fe-2S]-[ferredoxin] + CoA = 2-methylpropanoyl-CoA + 2 reduced [2Fe-2S]-[ferredoxin] + CO2 + H(+). The sequence is that of Ketoisovalerate oxidoreductase subunit VorA (vorA) from Pyrococcus horikoshii (strain ATCC 700860 / DSM 12428 / JCM 9974 / NBRC 100139 / OT-3).